Here is a 456-residue protein sequence, read N- to C-terminus: GTPase Der (456 aa).

2 EngA-type G domains span residues 3 to 167 and 185 to 360; these read FTIA…PETE and IRVA…AVWN. GTP contacts are provided by residues 9–16, 56–60, 119–122, 191–198, 238–242, and 303–306; these read GRPNVGKS, DTAGL, NKSE, GRPNAGKS, and NKWD. The KH-like domain maps to 361 to 445; that stretch reads RRVPTAALNR…PVRITLREKA (85 aa).

The protein belongs to the TRAFAC class TrmE-Era-EngA-EngB-Septin-like GTPase superfamily. EngA (Der) GTPase family. Associates with the 50S ribosomal subunit.

GTPase that plays an essential role in the late steps of ribosome biogenesis. This is GTPase Der from Bradyrhizobium sp. (strain BTAi1 / ATCC BAA-1182).